A 1121-amino-acid chain; its full sequence is MPMGRFLSLVRGDSAESPREITSQSNIIGDTGSNGWLIRFFDSAFFCEWIAVSYLYKHPHAGVRDYLCNRMYTLPLSGIESYLFQICYMMVHKPSPSLDKFVIDICGKSLKIALKVHWFLLAELEDADDNEGISRIQEKCQIAATLMGEWSPLMRPQNEVSTPGSKNQVLNRLLSSKQKLFSLKLSPPTQKSLSFSPSPGTNVQDDGSQLPAEDNKIFKKLIPSPKVRDALMFRKSADKDDEESEKEGFFKRLLRDSKGEGDEPIPNSEGFFKRLLKDNKSEDEDITNSSEGFFKRLLSSKGESEELTSSSDGLFKRLLRDNKGDEEELGANSDSFFKRLLRESKNEDEESNPNSEGFFKKLFRDSKPEDDKVPKEVDDEDKDGFLKKLFREKNDDKRHGSEKNEANGTVYADKKSGEEDEREGFFKKFFKEKSDDKKDIVKVDDGNESEGDESPEFSLFKRLFRIHPEDAKPTSENENSSNGLVESSPGTENFFRKLFRDRDQSVEDSELFGSKKHKEKRPGSPKQRDDTPSGKPPLPNNTASQFRKGAYHESLEFVQALCETSYGLVDIFPIEDRKIGLRESLAEINFHLSEAEITGGICFPMGRGVFRVVHIPEDECILLNSREKAPYMISVEVLKAETPSAKESSNSQKLSKGGIPLANGDAFLQKPPPWAYPLWTTQEVYRNSADRMSLSTAQAIDQAMTPKSEVKVKLVNVSLSVEDRTSALESFGDPIDDVLGEAPRTGLNNDLEWVRVVVTADPGLRMESIPDPSVPRKKEHRRVPSTVAMEEVRAAAAKGEAPPGLPLKGAGQDSSDAQPRANGGMLKEGDALSGELWEGKRDRIRKASIYGKLPGWDLRSIIVKSGDDCRQEHLAVQLISHFYDIFQEAGLPLWLRPYEVLVTSSYTALIETIPDTASIHSIKSRYPNITSLRDFFVAKYKENSPSFKLAQRNFVESMAGYSLVCYLLQVKDRHNGNLLLDEEGHIIHIDFGFMLSNSPGGVNFESAPFKLTRELLEVMDSDADGVPSEFFDYFKVLCIQGFLTCRKHAERIILLVEMLQDSGFPCFKGGPRTIQNLRKRFHLSLTEEQCVSLVLSLISSSLDAWRTRQYDYYQRVLNGIL.

The PIK helical domain occupies 1–143; sequence MPMGRFLSLV…SRIQEKCQIA (143 aa). A compositionally biased stretch (polar residues) spans 187–207; the sequence is PPTQKSLSFSPSPGTNVQDDG. The tract at residues 187-210 is disordered; the sequence is PPTQKSLSFSPSPGTNVQDDGSQL. Tandem repeats lie at residues 212 to 231, 244 to 263, 266 to 285, 288 to 306, 309 to 328, 331 to 350, 353 to 372, 380 to 398, and 420 to 438. The segment at 212-508 is 11 X 20 AA approximate repeats (PPC); that stretch reads AEDNKIFKKL…FRDRDQSVED (297 aa). Disordered stretches follow at residues 343 to 421, 435 to 489, 506 to 544, and 794 to 825; these read ESKN…EEDE, DDKK…ESSP, VEDSELFGSKKHKEKRPGSPKQRDDTPSGKPPLPNNTAS, and AAAAKGEAPPGLPLKGAGQDSSDAQPRANGGM. Basic and acidic residues-rich tracts occupy residues 358 to 376, 383 to 405, 412 to 421, and 435 to 445; these read FFKKLFRDSKPEDDKVPKE, DGFLKKLFREKNDDKRHGSEKNE, ADKKSGEEDE, and DDKKDIVKVDD. Positions 446–455 are enriched in acidic residues; it reads GNESEGDESP. Phosphoserine occurs at positions 449 and 454. Repeat copies occupy residues 454 to 472 and 489 to 508. The segment covering 466-475 has biased composition (basic and acidic residues); it reads IHPEDAKPTS. Positions 476–489 are enriched in polar residues; the sequence is ENENSSNGLVESSP. The region spanning 835–1106 is the PI3K/PI4K catalytic domain; that stretch reads ELWEGKRDRI…LISSSLDAWR (272 aa). A G-loop region spans residues 841–847; the sequence is RDRIRKA. Residues 969–977 are catalytic loop; sequence QVKDRHNGN. An activation loop region spans residues 988–1012; that stretch reads HIDFGFMLSNSPGGVNFESAPFKLT.

Belongs to the PI3/PI4-kinase family. Type III PI4K subfamily. Interacts with AHK2, CBL1 and RABA4D. Expressed constitutively in leaves, roots, flowers, and stems.

It is found in the cell membrane. The protein resides in the golgi apparatus. Its subcellular location is the trans-Golgi network. It localises to the cytoplasmic vesicle membrane. The enzyme catalyses a 1,2-diacyl-sn-glycero-3-phospho-(1D-myo-inositol) + ATP = a 1,2-diacyl-sn-glycero-3-phospho-(1D-myo-inositol 4-phosphate) + ADP + H(+). Its activity is regulated as follows. Stimulated by phosphatidylinositol 4-phosphate (PtdIns4P). Slightly repressed by phosphatidyl-choline (PtdCho), wortmannin and adenosine. In terms of biological role, acts on phosphatidylinositol (PtdIns) in the first committed step in the production of the second messenger inositol-1,4,5-trisphosphate. Necessary for proper organization of the trans-Golgi network (TGN) and post-Golgi secretion in root hairs. Together with PI4KB2, required during polarized root hair expansion and pollen tube elongation. Functions redundantly with PI4KB2 upstream of the cold response phosphoinositide-dependent phospholipase C (PI-PLC) pathway. The sequence is that of Phosphatidylinositol 4-kinase beta 1 from Arabidopsis thaliana (Mouse-ear cress).